A 376-amino-acid chain; its full sequence is Chaperone protein DnaJ (376 aa).

In terms of domain architecture, J spans 5–69 (DYYEVLGVSK…QKRAQYDQYG (65 aa)). Residues 133–215 (GKDAEIEIPR…CHGKGRVTKT (83 aa)) form a CR-type zinc finger. Cys-146, Cys-149, Cys-163, Cys-166, Cys-189, Cys-192, Cys-203, and Cys-206 together coordinate Zn(2+). CXXCXGXG motif repeat units lie at residues 146-153 (CDTCHGSG), 163-170 (CSHCGGKG), 189-196 (CQYCNGTG), and 203-210 (CPTCHGKG).

Belongs to the DnaJ family. In terms of assembly, homodimer. The cofactor is Zn(2+).

The protein resides in the cytoplasm. Functionally, participates actively in the response to hyperosmotic and heat shock by preventing the aggregation of stress-denatured proteins and by disaggregating proteins, also in an autonomous, DnaK-independent fashion. Unfolded proteins bind initially to DnaJ; upon interaction with the DnaJ-bound protein, DnaK hydrolyzes its bound ATP, resulting in the formation of a stable complex. GrpE releases ADP from DnaK; ATP binding to DnaK triggers the release of the substrate protein, thus completing the reaction cycle. Several rounds of ATP-dependent interactions between DnaJ, DnaK and GrpE are required for fully efficient folding. Also involved, together with DnaK and GrpE, in the DNA replication of plasmids through activation of initiation proteins. This Listeria monocytogenes serotype 4b (strain CLIP80459) protein is Chaperone protein DnaJ.